The chain runs to 308 residues: Homoserine kinase (308 aa).

95–105 (PQSRGLGSSAA) contributes to the ATP binding site.

This sequence belongs to the GHMP kinase family. Homoserine kinase subfamily.

It localises to the cytoplasm. It catalyses the reaction L-homoserine + ATP = O-phospho-L-homoserine + ADP + H(+). Its pathway is amino-acid biosynthesis; L-threonine biosynthesis; L-threonine from L-aspartate: step 4/5. In terms of biological role, catalyzes the ATP-dependent phosphorylation of L-homoserine to L-homoserine phosphate. The chain is Homoserine kinase from Corynebacterium diphtheriae (strain ATCC 700971 / NCTC 13129 / Biotype gravis).